The primary structure comprises 313 residues: Aspartate carbamoyltransferase catalytic subunit (313 aa).

2 residues coordinate carbamoyl phosphate: R59 and T60. K87 contacts L-aspartate. R109, H137, and Q140 together coordinate carbamoyl phosphate. L-aspartate-binding residues include R170 and R224. The carbamoyl phosphate site is built by G265 and P266.

It belongs to the aspartate/ornithine carbamoyltransferase superfamily. ATCase family. In terms of assembly, heterododecamer (2C3:3R2) of six catalytic PyrB chains organized as two trimers (C3), and six regulatory PyrI chains organized as three dimers (R2).

The catalysed reaction is carbamoyl phosphate + L-aspartate = N-carbamoyl-L-aspartate + phosphate + H(+). It participates in pyrimidine metabolism; UMP biosynthesis via de novo pathway; (S)-dihydroorotate from bicarbonate: step 2/3. Functionally, catalyzes the condensation of carbamoyl phosphate and aspartate to form carbamoyl aspartate and inorganic phosphate, the committed step in the de novo pyrimidine nucleotide biosynthesis pathway. This is Aspartate carbamoyltransferase catalytic subunit from Agrobacterium fabrum (strain C58 / ATCC 33970) (Agrobacterium tumefaciens (strain C58)).